We begin with the raw amino-acid sequence, 429 residues long: Aspartate--tRNA(Asp/Asn) ligase (429 aa).

Residue Glu-166 participates in L-aspartate binding. The segment at 188–191 (QLYK) is aspartate. Residue Arg-210 participates in L-aspartate binding. ATP-binding positions include 210–212 (RAE), 218–220 (RHL), and Glu-352. The Mg(2+) site is built by Glu-352 and Ser-355. L-aspartate-binding residues include Ser-355 and Arg-359. 400–403 (GIER) serves as a coordination point for ATP.

Belongs to the class-II aminoacyl-tRNA synthetase family. Type 2 subfamily. In terms of assembly, homodimer. The cofactor is Mg(2+).

The protein resides in the cytoplasm. The catalysed reaction is tRNA(Asx) + L-aspartate + ATP = L-aspartyl-tRNA(Asx) + AMP + diphosphate. Its function is as follows. Aspartyl-tRNA synthetase with relaxed tRNA specificity since it is able to aspartylate not only its cognate tRNA(Asp) but also tRNA(Asn). Reaction proceeds in two steps: L-aspartate is first activated by ATP to form Asp-AMP and then transferred to the acceptor end of tRNA(Asp/Asn). The protein is Aspartate--tRNA(Asp/Asn) ligase of Methanoculleus marisnigri (strain ATCC 35101 / DSM 1498 / JR1).